The sequence spans 174 residues: Transcription antitermination protein NusB (174 aa).

Belongs to the NusB family.

In terms of biological role, involved in transcription antitermination. Required for transcription of ribosomal RNA (rRNA) genes. Binds specifically to the boxA antiterminator sequence of the ribosomal RNA (rrn) operons. This Rhodopseudomonas palustris (strain TIE-1) protein is Transcription antitermination protein NusB.